A 348-amino-acid polypeptide reads, in one-letter code: Spermatogenesis-associated protein 32 (348 aa).

Residues 27–36 (YHHHHHPLED) are compositionally biased toward basic and acidic residues. The interval 27–61 (YHHHHHPLEDNKDEDNEMGTELSSMKPPPKVDPDP) is disordered. Residues serine 149 and serine 152 each carry the phosphoserine modification. The tract at residues 308–329 (APATSPELQEDKDDSVPGTKKG) is disordered. At threonine 330 the chain carries Phosphothreonine.

As to quaternary structure, interacts with syntaxin-1 and ACTB. As to expression, abundantly expressed in testes. Expressed in germ cells, but not in Sertoli or Leydig cells of the adult testis. Localized at the acrosomal region of the round and elongated spermatids at stages VIII-X.

This Rattus norvegicus (Rat) protein is Spermatogenesis-associated protein 32 (Spata32).